Consider the following 102-residue polypeptide: Small ribosomal subunit protein uS14 (102 aa).

Belongs to the universal ribosomal protein uS14 family. In terms of assembly, part of the 30S ribosomal subunit. Contacts proteins S3 and S10.

Binds 16S rRNA, required for the assembly of 30S particles and may also be responsible for determining the conformation of the 16S rRNA at the A site. In Ehrlichia ruminantium (strain Gardel), this protein is Small ribosomal subunit protein uS14.